A 108-amino-acid polypeptide reads, in one-letter code: Immunoglobulin kappa variable 11-125 (108 aa).

The framework-1 stretch occupies residues 1 to 23 (DVQMIQSPSSLSASLGDIVTMTC). Cysteines 23 and 88 form a disulfide. The segment at 24-34 (QASQGTSINLN) is complementarity-determining-1. A framework-2 region spans residues 35–49 (WFQQKPGKAPKLLIY). The tract at residues 50-56 (GASILED) is complementarity-determining-2. Positions 57-88 (GVPSRFSGSRYGTDFTLTISSLEDEDMATYFC) are framework-3. Positions 89–97 (LQHSYLPYT) are complementarity-determining-3. The tract at residues 98-108 (FGGGTKLEIKR) is framework-4.

This is Immunoglobulin kappa variable 11-125 from Mus musculus (Mouse).